Reading from the N-terminus, the 398-residue chain is Probable aminomethyltransferase (398 aa).

The protein belongs to the GcvT family. As to quaternary structure, the glycine cleavage system is composed of four proteins: P, T, L and H.

It catalyses the reaction N(6)-[(R)-S(8)-aminomethyldihydrolipoyl]-L-lysyl-[protein] + (6S)-5,6,7,8-tetrahydrofolate = N(6)-[(R)-dihydrolipoyl]-L-lysyl-[protein] + (6R)-5,10-methylene-5,6,7,8-tetrahydrofolate + NH4(+). Its function is as follows. The glycine cleavage system catalyzes the degradation of glycine. This chain is Probable aminomethyltransferase, found in Thermococcus kodakarensis (strain ATCC BAA-918 / JCM 12380 / KOD1) (Pyrococcus kodakaraensis (strain KOD1)).